Consider the following 162-residue polypeptide: Large ribosomal subunit protein uL30 (162 aa).

The protein belongs to the universal ribosomal protein uL30 family. In terms of assembly, part of the 50S ribosomal subunit.

This is Large ribosomal subunit protein uL30 from Staphylothermus marinus (strain ATCC 43588 / DSM 3639 / JCM 9404 / F1).